A 1193-amino-acid chain; its full sequence is DNA-directed RNA polymerase subunit beta (1193 aa).

The segment covering 1152-1161 (IEMRDLEDDE) has biased composition (acidic residues). The interval 1152-1193 (IEMRDLEDDEETKKADGLALSNDEDAADLAPVDLERDAVTKE) is disordered. Residues 1184-1193 (DLERDAVTKE) show a composition bias toward basic and acidic residues.

This sequence belongs to the RNA polymerase beta chain family. In terms of assembly, the RNAP catalytic core consists of 2 alpha, 1 beta, 1 beta' and 1 omega subunit. When a sigma factor is associated with the core the holoenzyme is formed, which can initiate transcription.

The catalysed reaction is RNA(n) + a ribonucleoside 5'-triphosphate = RNA(n+1) + diphosphate. Its function is as follows. DNA-dependent RNA polymerase catalyzes the transcription of DNA into RNA using the four ribonucleoside triphosphates as substrates. This chain is DNA-directed RNA polymerase subunit beta, found in Bacillus pumilus (strain SAFR-032).